The primary structure comprises 463 residues: Cytoplasmic 60S subunit biogenesis factor SPCC550.15c (463 aa).

C2H2-type zinc fingers lie at residues 5 to 30 and 70 to 94; these read FACT…DWHH and QNCE…SKKH. The disordered stretch occupies residues 109–136; that stretch reads KLQSEDASSIASSTLSMGEPVVDSEIEE. Polar residues predominate over residues 113–124; it reads EDASSIASSTLS. Ser150 and Ser155 each carry phosphoserine. The segment at 155-189 is disordered; it reads SLHGRESEPSKTELATSIPQSNEASKSHLFTQEPT. A compositionally biased stretch (polar residues) spans 167–188; the sequence is ELATSIPQSNEASKSHLFTQEP. C2H2-type zinc fingers lie at residues 208 to 231 and 259 to 283; these read RDCL…KASH and FTCL…QKGH. Over residues 317-338 the composition is skewed to acidic residues; sequence TVVEEDGSSGEGDWEDVSDDSD. Disordered regions lie at residues 317 to 341 and 444 to 463; these read TVVE…DNSS and ANKM…ALLQ.

The protein belongs to the REI1 family. As to quaternary structure, associates with nascent pre-60S particles that have not yet entered the translating pool, and is released from mature 60S subunits.

The protein localises to the cytoplasm. Its function is as follows. Pre-60S-associated factor involved in the cytoplasmic maturation of the 60S subunit. Involved in the dissociation and recycling of other late pre-60S factors before newly synthesized large ribosomal subunits enter translation. The sequence is that of Cytoplasmic 60S subunit biogenesis factor SPCC550.15c from Schizosaccharomyces pombe (strain 972 / ATCC 24843) (Fission yeast).